The primary structure comprises 236 residues: 2,3,4,5-tetrahydropyridine-2,6-dicarboxylate N-acetyltransferase (236 aa).

The protein belongs to the transferase hexapeptide repeat family. DapH subfamily.

The enzyme catalyses (S)-2,3,4,5-tetrahydrodipicolinate + acetyl-CoA + H2O = L-2-acetamido-6-oxoheptanedioate + CoA. Its pathway is amino-acid biosynthesis; L-lysine biosynthesis via DAP pathway; LL-2,6-diaminopimelate from (S)-tetrahydrodipicolinate (acetylase route): step 1/3. Functionally, catalyzes the transfer of an acetyl group from acetyl-CoA to tetrahydrodipicolinate. This is 2,3,4,5-tetrahydropyridine-2,6-dicarboxylate N-acetyltransferase from Clostridium perfringens (strain SM101 / Type A).